The following is a 624-amino-acid chain: Chaperone protein HtpG (624 aa).

Residues methionine 1–arginine 336 are a; substrate-binding. The b stretch occupies residues glutamate 337–lysine 552. Residues leucine 553–serine 624 form a c region.

This sequence belongs to the heat shock protein 90 family. As to quaternary structure, homodimer.

Its subcellular location is the cytoplasm. Its function is as follows. Molecular chaperone. Has ATPase activity. This chain is Chaperone protein HtpG, found in Salmonella typhi.